The primary structure comprises 284 residues: Pantothenate synthetase (284 aa).

30-37 (MGNLHEGH) is an ATP binding site. The active-site Proton donor is H37. Q61 contributes to the (R)-pantoate binding site. Q61 serves as a coordination point for beta-alanine. Residue 149 to 152 (GEKD) participates in ATP binding. A (R)-pantoate-binding site is contributed by Q155. ATP is bound by residues V178 and 186–189 (LSSR).

The protein belongs to the pantothenate synthetase family. In terms of assembly, homodimer.

The protein localises to the cytoplasm. The catalysed reaction is (R)-pantoate + beta-alanine + ATP = (R)-pantothenate + AMP + diphosphate + H(+). The protein operates within cofactor biosynthesis; (R)-pantothenate biosynthesis; (R)-pantothenate from (R)-pantoate and beta-alanine: step 1/1. Catalyzes the condensation of pantoate with beta-alanine in an ATP-dependent reaction via a pantoyl-adenylate intermediate. The protein is Pantothenate synthetase of Yersinia pseudotuberculosis serotype O:1b (strain IP 31758).